A 39-amino-acid chain; its full sequence is Photosystem II reaction center protein L (39 aa).

A helical transmembrane segment spans residues 16–37 (RTSLYLGLLLVAVLGILFSSYF).

Belongs to the PsbL family. PSII is composed of 1 copy each of membrane proteins PsbA, PsbB, PsbC, PsbD, PsbE, PsbF, PsbH, PsbI, PsbJ, PsbK, PsbL, PsbM, PsbT, PsbX, PsbY, PsbZ, Psb30/Ycf12, peripheral proteins PsbO, CyanoQ (PsbQ), PsbU, PsbV and a large number of cofactors. It forms dimeric complexes.

The protein resides in the cellular thylakoid membrane. In terms of biological role, one of the components of the core complex of photosystem II (PSII). PSII is a light-driven water:plastoquinone oxidoreductase that uses light energy to abstract electrons from H(2)O, generating O(2) and a proton gradient subsequently used for ATP formation. It consists of a core antenna complex that captures photons, and an electron transfer chain that converts photonic excitation into a charge separation. This subunit is found at the monomer-monomer interface and is required for correct PSII assembly and/or dimerization. Required for PSII activity, at least in part due to its effects on PSII assembly. May make specific contact(s) with lipids. This chain is Photosystem II reaction center protein L, found in Synechocystis sp. (strain ATCC 27184 / PCC 6803 / Kazusa).